A 352-amino-acid chain; its full sequence is Heat-inducible transcription repressor HrcA (352 aa).

This sequence belongs to the HrcA family.

Functionally, negative regulator of class I heat shock genes (grpE-dnaK-dnaJ and groELS operons). Prevents heat-shock induction of these operons. The polypeptide is Heat-inducible transcription repressor HrcA (Thermosynechococcus vestitus (strain NIES-2133 / IAM M-273 / BP-1)).